Consider the following 422-residue polypeptide: Transcription termination factor Rho 1 (422 aa).

The 76-residue stretch at 49-124 (AAIGGGVVEI…VKAHSINFTD (76 aa)) folds into the Rho RNA-BD domain. ATP-binding positions include 173-178 (GKGQRA), 185-190 (RAGKTI), and Arg-216.

This sequence belongs to the Rho family. In terms of assembly, homohexamer. The homohexamer assembles into an open ring structure.

Functionally, facilitates transcription termination by a mechanism that involves Rho binding to the nascent RNA, activation of Rho's RNA-dependent ATPase activity, and release of the mRNA from the DNA template. The chain is Transcription termination factor Rho 1 from Ehrlichia chaffeensis (strain ATCC CRL-10679 / Arkansas).